Consider the following 120-residue polypeptide: Chaperonin GroEL (120 aa).

Residue 23–27 (DGTTT) coordinates ATP.

It belongs to the chaperonin (HSP60) family. In terms of assembly, forms a cylinder of 14 subunits composed of two heptameric rings stacked back-to-back. Interacts with the co-chaperonin GroES.

Its subcellular location is the cytoplasm. It carries out the reaction ATP + H2O + a folded polypeptide = ADP + phosphate + an unfolded polypeptide.. Together with its co-chaperonin GroES, plays an essential role in assisting protein folding. The GroEL-GroES system forms a nano-cage that allows encapsulation of the non-native substrate proteins and provides a physical environment optimized to promote and accelerate protein folding. The chain is Chaperonin GroEL from Mycolicibacterium fallax (Mycobacterium fallax).